Reading from the N-terminus, the 228-residue chain is Endo-1,4-beta-xylanase B (228 aa).

A signal peptide spans 1–19; sequence MVSFTYLLAAVSAVTGAVA. The GH11 domain occupies 37 to 227; the sequence is KRTSPTTGVN…SSGQATMTVS (191 aa). Catalysis depends on glutamate 122, which acts as the Nucleophile. Glutamate 214 acts as the Proton donor in catalysis.

It belongs to the glycosyl hydrolase 11 (cellulase G) family.

It is found in the secreted. It carries out the reaction Endohydrolysis of (1-&gt;4)-beta-D-xylosidic linkages in xylans.. It participates in glycan degradation; xylan degradation. Its activity is regulated as follows. Inhibited by the proteinaceous endoxylanase inhibitor I from T.aestivum (TAXI-I). Its function is as follows. Endo-1,4-beta-xylanase involved in the hydrolysis of xylan, a major structural heterogeneous polysaccharide found in plant biomass representing the second most abundant polysaccharide in the biosphere, after cellulose. Plays an important role in causing fusarium head blight (FHB) on cereal crops. Induces cell death and hydrogen peroxide accumulation in infected wheat leaves. The protein is Endo-1,4-beta-xylanase B (XYLB) of Gibberella zeae (strain ATCC MYA-4620 / CBS 123657 / FGSC 9075 / NRRL 31084 / PH-1) (Wheat head blight fungus).